A 219-amino-acid polypeptide reads, in one-letter code: Adenylate kinase (219 aa).

10-15 (GAGKGT) contacts ATP. Residues 30–59 (STGDMLRAAVKAETPVGLEAKKVMDAGQLV) form an NMP region. Residues T31, R36, 57–59 (QLV), 85–88 (GFPR), and Q92 each bind AMP. An LID region spans residues 122–159 (GRRVHLSSGRTYHVLFNPPKQEGLDDETGEPLVQRADD). Residues R123 and 132–133 (TY) contribute to the ATP site. R156 and R167 together coordinate AMP. Residue G203 coordinates ATP.

Belongs to the adenylate kinase family. As to quaternary structure, monomer.

It localises to the cytoplasm. It catalyses the reaction AMP + ATP = 2 ADP. Its pathway is purine metabolism; AMP biosynthesis via salvage pathway; AMP from ADP: step 1/1. Its function is as follows. Catalyzes the reversible transfer of the terminal phosphate group between ATP and AMP. Plays an important role in cellular energy homeostasis and in adenine nucleotide metabolism. This is Adenylate kinase from Chlorobium limicola (strain DSM 245 / NBRC 103803 / 6330).